The following is a 170-amino-acid chain: Cytochrome b6-f complex subunit 4 (170 aa).

The next 3 membrane-spanning stretches (helical) occupy residues 36–56 (LLYI…GLAV), 95–115 (LLGV…PFLE), and 131–151 (TVFL…TLPI).

Belongs to the cytochrome b family. PetD subfamily. The 4 large subunits of the cytochrome b6-f complex are cytochrome b6, subunit IV (17 kDa polypeptide, petD), cytochrome f and the Rieske protein, while the 4 small subunits are petG, petL, petM and petN. The complex functions as a dimer.

The protein localises to the plastid. It is found in the chloroplast thylakoid membrane. In terms of biological role, component of the cytochrome b6-f complex, which mediates electron transfer between photosystem II (PSII) and photosystem I (PSI), cyclic electron flow around PSI, and state transitions. In Nymphaea alba (White water-lily), this protein is Cytochrome b6-f complex subunit 4.